The chain runs to 208 residues: Adenylyl-sulfate kinase (208 aa).

An ATP-binding site is contributed by 31-38 (GLSGSGKS). The Phosphoserine intermediate role is filled by Ser-105.

It belongs to the APS kinase family.

It catalyses the reaction adenosine 5'-phosphosulfate + ATP = 3'-phosphoadenylyl sulfate + ADP + H(+). It functions in the pathway sulfur metabolism; hydrogen sulfide biosynthesis; sulfite from sulfate: step 2/3. Functionally, catalyzes the synthesis of activated sulfate. This Pseudomonas entomophila (strain L48) protein is Adenylyl-sulfate kinase.